Consider the following 631-residue polypeptide: 1-deoxy-D-xylulose-5-phosphate synthase (631 aa).

Residues His87 and 128–130 each bind thiamine diphosphate; that span reads GHS. Asp159 is a Mg(2+) binding site. Thiamine diphosphate is bound by residues 160–161, Asn188, Phe295, and Glu377; that span reads GA. A Mg(2+)-binding site is contributed by Asn188.

This sequence belongs to the transketolase family. DXPS subfamily. In terms of assembly, homodimer. It depends on Mg(2+) as a cofactor. The cofactor is thiamine diphosphate.

It catalyses the reaction D-glyceraldehyde 3-phosphate + pyruvate + H(+) = 1-deoxy-D-xylulose 5-phosphate + CO2. It participates in metabolic intermediate biosynthesis; 1-deoxy-D-xylulose 5-phosphate biosynthesis; 1-deoxy-D-xylulose 5-phosphate from D-glyceraldehyde 3-phosphate and pyruvate: step 1/1. Its function is as follows. Catalyzes the acyloin condensation reaction between C atoms 2 and 3 of pyruvate and glyceraldehyde 3-phosphate to yield 1-deoxy-D-xylulose-5-phosphate (DXP). The chain is 1-deoxy-D-xylulose-5-phosphate synthase from Pseudomonas putida (strain W619).